Consider the following 341-residue polypeptide: Ketol-acid reductoisomerase (NADP(+)) (341 aa).

The 182-residue stretch at 1–182 folds into the KARI N-terminal Rossmann domain; the sequence is MTEMFYDDDA…GGTRAGVIKT (182 aa). Residues 25–28, lysine 48, serine 51, serine 53, and 83–86 each bind NADP(+); these read YGSQ and DQHQ. Histidine 108 is a catalytic residue. Residue glycine 134 participates in NADP(+) binding. One can recognise a KARI C-terminal knotted domain in the interval 183–328; it reads TFTEETETDL…RELRGLFSWQ (146 aa). Positions 191, 195, 227, and 231 each coordinate Mg(2+). Residue serine 252 participates in substrate binding.

It belongs to the ketol-acid reductoisomerase family. Mg(2+) serves as cofactor.

It carries out the reaction (2R)-2,3-dihydroxy-3-methylbutanoate + NADP(+) = (2S)-2-acetolactate + NADPH + H(+). The catalysed reaction is (2R,3R)-2,3-dihydroxy-3-methylpentanoate + NADP(+) = (S)-2-ethyl-2-hydroxy-3-oxobutanoate + NADPH + H(+). Its pathway is amino-acid biosynthesis; L-isoleucine biosynthesis; L-isoleucine from 2-oxobutanoate: step 2/4. It participates in amino-acid biosynthesis; L-valine biosynthesis; L-valine from pyruvate: step 2/4. Functionally, involved in the biosynthesis of branched-chain amino acids (BCAA). Catalyzes an alkyl-migration followed by a ketol-acid reduction of (S)-2-acetolactate (S2AL) to yield (R)-2,3-dihydroxy-isovalerate. In the isomerase reaction, S2AL is rearranged via a Mg-dependent methyl migration to produce 3-hydroxy-3-methyl-2-ketobutyrate (HMKB). In the reductase reaction, this 2-ketoacid undergoes a metal-dependent reduction by NADPH to yield (R)-2,3-dihydroxy-isovalerate. This is Ketol-acid reductoisomerase (NADP(+)) from Arthrobacter sp. (strain FB24).